Here is a 191-residue protein sequence, read N- to C-terminus: Protein Ves (191 aa).

Belongs to the Ves family.

In Escherichia coli (strain ATCC 8739 / DSM 1576 / NBRC 3972 / NCIMB 8545 / WDCM 00012 / Crooks), this protein is Protein Ves.